Consider the following 312-residue polypeptide: MMSNLCNRISKKELKKKILMNEESRIVVSFYKYFLIKNTKEYRDRIYQNFYKYNVLGRVYVSDEGINAQISIPVKFYFFVKNFLYNSDLELNNLFINKSLSNHKKAFWVLSVKIKKKIVNDGITNPLFNFKKVGIYIKSRQVNMMLSDRNVIFIDMRNSYEYEIGHFPNAIEIKSQTFREQLKKVIQIMHYAKNKKIVMYCTGGIRCEKASAWMHFNGFKYVYHLKNGILGYVHDANKNGLPILFQGSNFVFDNRMSEKISDKIISFCKQCDKPSDRYVNCNFNLCHLLFIQCKDCTIKFKKCCSKYCMQHL.

Residues 147–237 enclose the Rhodanese domain; the sequence is SDRNVIFIDM…GILGYVHDAN (91 aa). Cys-201 functions as the Cysteine persulfide intermediate in the catalytic mechanism.

It belongs to the TrhO family.

It catalyses the reaction uridine(34) in tRNA + AH2 + O2 = 5-hydroxyuridine(34) in tRNA + A + H2O. Its function is as follows. Catalyzes oxygen-dependent 5-hydroxyuridine (ho5U) modification at position 34 in tRNAs. This is tRNA uridine(34) hydroxylase from Buchnera aphidicola subsp. Schizaphis graminum (strain Sg).